Consider the following 314-residue polypeptide: Probable cell division protein WhiA (314 aa).

Positions 274 to 308 form a DNA-binding region, H-T-H motif; that stretch reads SLKELGEMISTGPISKSGVNHRLRKLNELADKIRS.

The protein belongs to the WhiA family.

Its function is as follows. Involved in cell division and chromosome segregation. The protein is Probable cell division protein WhiA of Staphylococcus haemolyticus (strain JCSC1435).